We begin with the raw amino-acid sequence, 665 residues long: DNA ligase (665 aa).

Residues 32 to 36 (DSEYD), 81 to 82 (SL), and glutamate 110 each bind NAD(+). Lysine 112 functions as the N6-AMP-lysine intermediate in the catalytic mechanism. Arginine 133, glutamate 167, lysine 283, and lysine 307 together coordinate NAD(+). Residues cysteine 401, cysteine 404, cysteine 419, and cysteine 424 each contribute to the Zn(2+) site. The BRCT domain occupies 586 to 665 (EGHPDFSGKT…AAFIEKQNGI (80 aa)).

It belongs to the NAD-dependent DNA ligase family. LigA subfamily. Mg(2+) is required as a cofactor. It depends on Mn(2+) as a cofactor.

It catalyses the reaction NAD(+) + (deoxyribonucleotide)n-3'-hydroxyl + 5'-phospho-(deoxyribonucleotide)m = (deoxyribonucleotide)n+m + AMP + beta-nicotinamide D-nucleotide.. In terms of biological role, DNA ligase that catalyzes the formation of phosphodiester linkages between 5'-phosphoryl and 3'-hydroxyl groups in double-stranded DNA using NAD as a coenzyme and as the energy source for the reaction. It is essential for DNA replication and repair of damaged DNA. In Staphylococcus epidermidis (strain ATCC 35984 / DSM 28319 / BCRC 17069 / CCUG 31568 / BM 3577 / RP62A), this protein is DNA ligase.